The following is a 187-amino-acid chain: MPVDLSKWSGPLSLQEVEERPQHPLQVTYSGVALDELGQVLTPTQVKNRPTSIVWDGLDPDKLYTLVLTDPDAPSRKDPKYREWHHFLVVNMKGGNISSGTVLSDYVGSGPPKGTGLHRYVWLVYEQDGPLKCDEPVLSNRSGDHRGKFKVANFRKKYHLGTPVAGSCYQAEWDDYVPKLYELLSGK.

A phosphoserine mark is found at Ser6 and Ser13. A Phosphothreonine modification is found at Thr42. Phosphoserine occurs at positions 52 and 98. Positions 93–134 are interaction with RAF1; sequence KGGNISSGTVLSDYVGSGPPKGTGLHRYVWLVYEQDGPLKCD.

Belongs to the phosphatidylethanolamine-binding protein family. Has a tendency to form dimers by disulfide cross-linking. Interacts with RAF1 and this interaction is enhanced if RAF1 is phosphorylated on residues 'Ser-338', 'Ser-339', 'Tyr-340' and 'Tyr-341'. Interacts with ALOX15; in response to IL13/interleukin-13, prevents the interaction of PEBP1 with RAF1 to activate the ERK signaling cascade.

It is found in the cytoplasm. Binds ATP, opioids and phosphatidylethanolamine. Has lower affinity for phosphatidylinositol and phosphatidylcholine. Serine protease inhibitor which inhibits thrombin, neuropsin and chymotrypsin but not trypsin, tissue type plasminogen activator and elastase. Inhibits the kinase activity of RAF1 by inhibiting its activation and by dissociating the RAF1/MEK complex and acting as a competitive inhibitor of MEK phosphorylation. Its function is as follows. HCNP may be involved in the function of the presynaptic cholinergic neurons of the central nervous system. HCNP increases the production of choline acetyltransferase but not acetylcholinesterase. Seems to be mediated by a specific receptor. This Oryctolagus cuniculus (Rabbit) protein is Phosphatidylethanolamine-binding protein 1 (PEBP1).